We begin with the raw amino-acid sequence, 713 residues long: Serologically defined colon cancer antigen 8 (713 aa).

Phosphoserine occurs at positions 4 and 28. The interval 84-103 (QADKESEVSPSRRRKMSPLR) is disordered. The stretch at 129–175 (IHHLEAEVKFCKEELSGMKNKIQVVVLENEGLQQQLKSQRQEETLRE) forms a coiled coil. Residues 194-215 (EDSGVGETSKRPFSHDNADFGK) are disordered. Over residues 201–212 (TSKRPFSHDNAD) the composition is skewed to basic and acidic residues. The segment at 216 to 713 (AASAGEQLEL…QLPSMPQSDC (498 aa)) is sufficient for homodimerization. Coiled-coil stretches lie at residues 223–273 (LELE…LLAA) and 348–707 (EEAN…QLPS). The mediates interaction with OFD1 stretch occupies residues 533 to 713 (HQLHLTRQEK…QLPSMPQSDC (181 aa)).

Homodimer. Interacts with OFD1; the interaction is direct. Interacts with FAM161A. Interacts with RABEP2, ERC1 and CEP131. As to expression, expressed in thymus, prostate, testis, ovary, small intestine, colon, mucosa, colon and renal cancer tumors.

The protein resides in the cytoplasm. The protein localises to the cytoskeleton. It localises to the microtubule organizing center. It is found in the centrosome. Its subcellular location is the centriole. The protein resides in the cilium basal body. The protein localises to the cell junction. Plays a role in the establishment of cell polarity and epithelial lumen formation. Also plays an essential role in ciliogenesis and subsequent Hedgehog signaling pathway that requires the presence of intact primary cilia for pathway activation. Mechanistically, interacts with and mediates RABEP2 centrosomal localization which is critical for ciliogenesis. In Homo sapiens (Human), this protein is Serologically defined colon cancer antigen 8 (SDCCAG8).